We begin with the raw amino-acid sequence, 439 residues long: GTPase Der (439 aa).

EngA-type G domains follow at residues 4–168 and 177–352; these read PIVA…KDDE and INIA…DNYT. Residues 10 to 17, 57 to 61, 120 to 123, 183 to 190, 230 to 234, and 295 to 298 each bind GTP; these read GRPNVGKS, DTGGI, NKID, GKPNVGKS, DTAGL, and NKWD. The KH-like domain occupies 353–437; it reads KRVKTGVLND…GIKLEFRERK (85 aa).

Belongs to the TRAFAC class TrmE-Era-EngA-EngB-Septin-like GTPase superfamily. EngA (Der) GTPase family. Associates with the 50S ribosomal subunit.

GTPase that plays an essential role in the late steps of ribosome biogenesis. This is GTPase Der from Clostridium botulinum (strain Langeland / NCTC 10281 / Type F).